A 622-amino-acid chain; its full sequence is UvrABC system protein C (622 aa).

The GIY-YIG domain maps to 12 to 91 (SSPGVYIMKD…IKKYRPKYNF (80 aa)). The UVR domain maps to 201–236 (REILKIFRERMSAAAAAEKYEKAARFRDLIRSIEVT).

The protein belongs to the UvrC family. Interacts with UvrB in an incision complex.

It is found in the cytoplasm. Functionally, the UvrABC repair system catalyzes the recognition and processing of DNA lesions. UvrC both incises the 5' and 3' sides of the lesion. The N-terminal half is responsible for the 3' incision and the C-terminal half is responsible for the 5' incision. The chain is UvrABC system protein C from Geotalea daltonii (strain DSM 22248 / JCM 15807 / FRC-32) (Geobacter daltonii).